The following is a 78-amino-acid chain: Small ribosomal subunit protein bS18 (78 aa).

This sequence belongs to the bacterial ribosomal protein bS18 family. Part of the 30S ribosomal subunit. Forms a tight heterodimer with protein bS6.

Functionally, binds as a heterodimer with protein bS6 to the central domain of the 16S rRNA, where it helps stabilize the platform of the 30S subunit. The protein is Small ribosomal subunit protein bS18 of Limosilactobacillus reuteri (strain DSM 20016) (Lactobacillus reuteri).